Here is a 94-residue protein sequence, read N- to C-terminus: Small ribosomal subunit protein bS18 (94 aa).

This sequence belongs to the bacterial ribosomal protein bS18 family. Part of the 30S ribosomal subunit. Forms a tight heterodimer with protein bS6.

Functionally, binds as a heterodimer with protein bS6 to the central domain of the 16S rRNA, where it helps stabilize the platform of the 30S subunit. This chain is Small ribosomal subunit protein bS18, found in Leptothrix cholodnii (strain ATCC 51168 / LMG 8142 / SP-6) (Leptothrix discophora (strain SP-6)).